A 276-amino-acid polypeptide reads, in one-letter code: D-aminoacyl-tRNA deacylase (276 aa).

Belongs to the DtdA deacylase family. In terms of assembly, monomer. The cofactor is Zn(2+).

The enzyme catalyses a D-aminoacyl-tRNA + H2O = a tRNA + a D-alpha-amino acid + H(+). The catalysed reaction is glycyl-tRNA(Ala) + H2O = tRNA(Ala) + glycine + H(+). D-aminoacyl-tRNA deacylase with broad substrate specificity. By recycling D-aminoacyl-tRNA to D-amino acids and free tRNA molecules, this enzyme counteracts the toxicity associated with the formation of D-aminoacyl-tRNA entities in vivo. This chain is D-aminoacyl-tRNA deacylase, found in Korarchaeum cryptofilum (strain OPF8).